A 284-amino-acid polypeptide reads, in one-letter code: MEMO1 family protein LS215_2219 (284 aa).

Belongs to the MEMO1 family.

In Saccharolobus islandicus (strain L.S.2.15 / Lassen #1) (Sulfolobus islandicus), this protein is MEMO1 family protein LS215_2219.